The primary structure comprises 235 residues: Large ribosomal subunit protein uL1 (235 aa).

Belongs to the universal ribosomal protein uL1 family. Part of the 50S ribosomal subunit.

Its function is as follows. Binds directly to 23S rRNA. The L1 stalk is quite mobile in the ribosome, and is involved in E site tRNA release. Functionally, protein L1 is also a translational repressor protein, it controls the translation of the L11 operon by binding to its mRNA. The sequence is that of Large ribosomal subunit protein uL1 from Nitratidesulfovibrio vulgaris (strain DSM 19637 / Miyazaki F) (Desulfovibrio vulgaris).